Reading from the N-terminus, the 324-residue chain is Protein FAM228B (324 aa).

Belongs to the FAM228 family.

The sequence is that of Protein FAM228B (FAM228B) from Homo sapiens (Human).